A 273-amino-acid chain; its full sequence is Proteasome subunit beta (273 aa).

Residues 1–50 (MRKDGARLALPLFDPRHDPGPDFAALVSRDAARTVPTSGDGSLGAQVPHG) constitute a propeptide, removed in mature form; by autocatalysis. The active-site Nucleophile is Thr-51.

Belongs to the peptidase T1B family. As to quaternary structure, the 20S proteasome core is composed of 14 alpha and 14 beta subunits that assemble into four stacked heptameric rings, resulting in a barrel-shaped structure. The two inner rings, each composed of seven catalytic beta subunits, are sandwiched by two outer rings, each composed of seven alpha subunits. The catalytic chamber with the active sites is on the inside of the barrel. Has a gated structure, the ends of the cylinder being occluded by the N-termini of the alpha-subunits. Is capped by the proteasome-associated ATPase, ARC.

Its subcellular location is the cytoplasm. It carries out the reaction Cleavage of peptide bonds with very broad specificity.. Its pathway is protein degradation; proteasomal Pup-dependent pathway. The formation of the proteasomal ATPase ARC-20S proteasome complex, likely via the docking of the C-termini of ARC into the intersubunit pockets in the alpha-rings, may trigger opening of the gate for substrate entry. Interconversion between the open-gate and close-gate conformations leads to a dynamic regulation of the 20S proteasome proteolysis activity. Functionally, component of the proteasome core, a large protease complex with broad specificity involved in protein degradation. This is Proteasome subunit beta from Acidimicrobium ferrooxidans (strain DSM 10331 / JCM 15462 / NBRC 103882 / ICP).